The chain runs to 413 residues: NAD-dependent dihydropyrimidine dehydrogenase subunit PreT homolog (413 aa).

E287 lines the NAD(+) pocket.

Belongs to the NADH dehydrogenase family. As to quaternary structure, heterotetramer of 2 PreA and 2 PreT subunits.

The enzyme catalyses 5,6-dihydrouracil + NAD(+) = uracil + NADH + H(+). It carries out the reaction 5,6-dihydrothymine + NAD(+) = thymine + NADH + H(+). Involved in pyrimidine base degradation. Catalyzes physiologically the reduction of uracil to 5,6-dihydrouracil (DHU) by using NADH as a specific cosubstrate. It also catalyzes the reverse reaction and the reduction of thymine to 5,6-dihydrothymine (DHT). The protein is NAD-dependent dihydropyrimidine dehydrogenase subunit PreT homolog (preT) of Salmonella typhi.